A 637-amino-acid chain; its full sequence is Epithelial sodium channel subunit alpha (637 aa).

Residues 1–34 form a disordered region; the sequence is MGTASRGGSVKAEKMPEGEKTRQCKQETEQQQKE. At 1–76 the chain is on the cytoplasmic side; that stretch reads MGTASRGGSV…VCSKKNKMKT (76 aa). The segment covering 11-34 has biased composition (basic and acidic residues); it reads KAEKMPEGEKTRQCKQETEQQQKE. The chain crosses the membrane as a helical span at residues 77 to 97; sequence AFWSVLFILTFGLMYWQFGIL. At 98–548 the chain is on the extracellular side; that stretch reads YREYFSYPVN…NQWSLWFGSS (451 aa). Cystine bridges form between C125–C292, C217–C224, C269–C276, C380–C465, C402–C442, C402–C461, C406–C457, C415–C442, C415–C465, and C417–C431. A helical transmembrane segment spans residues 549 to 569; that stretch reads VLSVMELAELILDFTVITFIL. Residues 570–637 lie on the Cytoplasmic side of the membrane; that stretch reads AFRWFRSKQW…PSKDGETGLE (68 aa).

It belongs to the amiloride-sensitive sodium channel (TC 1.A.6) family. SCNN1A subfamily. As to quaternary structure, heterotrimer; containing an alpha/SCNN1A, a beta/SCNN1B and a gamma/SCNN1G subunit. In terms of tissue distribution, the long isoform has been found in cochlea, colon, and cartilage. The short isoform is only found in cochlea.

The protein resides in the apical cell membrane. The protein localises to the cell projection. It localises to the cilium. It is found in the cytoplasmic granule. Its subcellular location is the cytoplasm. The protein resides in the cytoplasmic vesicle. The protein localises to the secretory vesicle. It localises to the acrosome. It is found in the flagellum. The catalysed reaction is Na(+)(in) = Na(+)(out). Its activity is regulated as follows. Originally identified and characterized by its inhibition by the diuretic drug amiloride. Functionally, this is one of the three pore-forming subunits of the heterotrimeric epithelial sodium channel (ENaC), a critical regulator of sodium balance and fluid homeostasis. ENaC operates in epithelial tissues, where it mediates the electrodiffusion of sodium ions from extracellular fluid through the apical membrane of cells, with water following osmotically. The polypeptide is Epithelial sodium channel subunit alpha (Gallus gallus (Chicken)).